The sequence spans 560 residues: Involucrin (560 aa).

The span at 1–15 (MSQQHTLPVTLSPAL) shows a compositional bias: polar residues. Disordered regions lie at residues 1-131 (MSQQ…KLLD), 150-359 (EQLL…LVQQ), and 404-534 (GQLK…QSAL). Positions 76–91 (EQQQQEPQEQELQQQH) are enriched in low complexity. Composition is skewed to basic and acidic residues over residues 92-115 (WEQH…KAQR) and 159-172 (QEGH…REGQ). Positions 189 to 211 (QKGQLELPEQQEGQLELPEQQEG) are enriched in low complexity. Composition is skewed to basic and acidic residues over residues 212–231 (QLKH…HQEG), 252–264 (QLKH…KQPE), and 274–320 (KHLE…EHQE). Low complexity predominate over residues 321–334 (GQLGLPEQQVQQLK). Composition is skewed to basic and acidic residues over residues 335 to 353 (QLEK…EGQL), 404 to 420 (GQLK…KHLE), 454 to 463 (QLKHLEKQEA), 476 to 486 (KHLEQQEKQLE), and 494 to 510 (QLKH…DLEQ).

This sequence belongs to the involucrin family. As to quaternary structure, directly or indirectly cross-linked to cornifelin (CNFN). Substrate of transglutaminase. Specific glutamines or lysines are cross-linked to keratins, desmoplakin and to inter involucrin molecules. As to expression, keratinocytes of epidermis and other stratified squamous epithelia.

The protein resides in the cytoplasm. In terms of biological role, part of the insoluble cornified cell envelope (CE) of stratified squamous epithelia. This Pan paniscus (Pygmy chimpanzee) protein is Involucrin (IVL).